The primary structure comprises 404 residues: Cysteine desulfurase IscS (404 aa).

Pyridoxal 5'-phosphate contacts are provided by residues 75–76 (AT), asparagine 155, glutamine 183, and 203–205 (SAH). An N6-(pyridoxal phosphate)lysine modification is found at lysine 206. Threonine 243 provides a ligand contact to pyridoxal 5'-phosphate. The active-site Cysteine persulfide intermediate is cysteine 328. [2Fe-2S] cluster is bound at residue cysteine 328.

It belongs to the class-V pyridoxal-phosphate-dependent aminotransferase family. NifS/IscS subfamily. As to quaternary structure, homodimer. Forms a heterotetramer with IscU, interacts with other sulfur acceptors. Pyridoxal 5'-phosphate serves as cofactor.

It is found in the cytoplasm. The catalysed reaction is (sulfur carrier)-H + L-cysteine = (sulfur carrier)-SH + L-alanine. It functions in the pathway cofactor biosynthesis; iron-sulfur cluster biosynthesis. Functionally, master enzyme that delivers sulfur to a number of partners involved in Fe-S cluster assembly, tRNA modification or cofactor biosynthesis. Catalyzes the removal of elemental sulfur atoms from cysteine to produce alanine. Functions as a sulfur delivery protein for Fe-S cluster synthesis onto IscU, an Fe-S scaffold assembly protein, as well as other S acceptor proteins. This Aeromonas salmonicida (strain A449) protein is Cysteine desulfurase IscS.